The sequence spans 338 residues: Glycerol-3-phosphate dehydrogenase [NAD(P)+] (338 aa).

Residues Ser-13, Trp-14, and Lys-108 each coordinate NADPH. Sn-glycerol 3-phosphate is bound by residues Lys-108, Gly-139, and Ser-141. Ala-143 contributes to the NADPH binding site. Residues Lys-194, Asp-247, Ser-257, Arg-258, and Asn-259 each contribute to the sn-glycerol 3-phosphate site. The active-site Proton acceptor is Lys-194. Position 258 (Arg-258) interacts with NADPH. NADPH contacts are provided by Val-282 and Glu-284.

The protein belongs to the NAD-dependent glycerol-3-phosphate dehydrogenase family.

It is found in the cytoplasm. It catalyses the reaction sn-glycerol 3-phosphate + NAD(+) = dihydroxyacetone phosphate + NADH + H(+). The enzyme catalyses sn-glycerol 3-phosphate + NADP(+) = dihydroxyacetone phosphate + NADPH + H(+). Its pathway is membrane lipid metabolism; glycerophospholipid metabolism. In terms of biological role, catalyzes the reduction of the glycolytic intermediate dihydroxyacetone phosphate (DHAP) to sn-glycerol 3-phosphate (G3P), the key precursor for phospholipid synthesis. The chain is Glycerol-3-phosphate dehydrogenase [NAD(P)+] from Streptococcus pneumoniae (strain P1031).